The sequence spans 306 residues: Small ribosomal subunit protein uS2 (306 aa).

Over residues G229 to P238 the composition is skewed to basic and acidic residues. The segment at G229–R306 is disordered. Positions Q261–E287 are enriched in acidic residues.

The protein belongs to the universal ribosomal protein uS2 family.

In Rubrobacter xylanophilus (strain DSM 9941 / JCM 11954 / NBRC 16129 / PRD-1), this protein is Small ribosomal subunit protein uS2.